A 99-amino-acid polypeptide reads, in one-letter code: Integration host factor subunit alpha (99 aa).

This sequence belongs to the bacterial histone-like protein family. As to quaternary structure, heterodimer of an alpha and a beta chain.

This protein is one of the two subunits of integration host factor, a specific DNA-binding protein that functions in genetic recombination as well as in transcriptional and translational control. The polypeptide is Integration host factor subunit alpha (Enterobacter sp. (strain 638)).